The sequence spans 181 residues: Large ribosomal subunit protein uL16 (181 aa).

The protein belongs to the universal ribosomal protein uL16 family.

This Pyrococcus horikoshii (strain ATCC 700860 / DSM 12428 / JCM 9974 / NBRC 100139 / OT-3) protein is Large ribosomal subunit protein uL16.